We begin with the raw amino-acid sequence, 190 residues long: GTP cyclohydrolase 1 (190 aa).

Zn(2+) contacts are provided by Cys80, His83, and Cys151.

It belongs to the GTP cyclohydrolase I family. Toroid-shaped homodecamer, composed of two pentamers of five dimers.

It carries out the reaction GTP + H2O = 7,8-dihydroneopterin 3'-triphosphate + formate + H(+). It functions in the pathway cofactor biosynthesis; 7,8-dihydroneopterin triphosphate biosynthesis; 7,8-dihydroneopterin triphosphate from GTP: step 1/1. This Rickettsia prowazekii (strain Madrid E) protein is GTP cyclohydrolase 1 (folE).